Here is a 1523-residue protein sequence, read N- to C-terminus: Dicer-like protein 1 (1523 aa).

Over residues 24-38 (LNLSGERTISTTEPT) the composition is skewed to polar residues. The disordered stretch occupies residues 24–58 (LNLSGERTISTTEPTEGNDSSSEESGDNEQISTQR). The Helicase ATP-binding domain occupies 123–304 (LFERAKSQNT…ESATKLEVLL (182 aa)). 136-143 (LDTGSGKT) is an ATP binding site. Positions 249–252 (DEAH) match the DEAH box motif. Positions 444 to 617 (LLRQKLIKYF…GIDSEIDSIL (174 aa)) constitute a Helicase C-terminal domain. One can recognise a Dicer dsRNA-binding fold domain in the interval 640–730 (ALAILARYAS…NSVYHRRLPA (91 aa)). The PAZ domain maps to 879-1007 (ELLHLVHENE…VCIEPLRISA (129 aa)). 2 RNase III domains span residues 1031–1190 (IALE…LSGG) and 1241–1392 (GRKV…VDSD). 3 residues coordinate Mg(2+): E1281, D1378, and E1381. A DRBM domain is found at 1426–1494 (TFLQNRLTNE…SEKALSVLEN (69 aa)). Zn(2+)-binding residues include C1438, H1465, C1506, and C1508.

The protein belongs to the helicase family. Dicer subfamily. Mg(2+) serves as cofactor. Requires Mn(2+) as cofactor.

In terms of biological role, dicer-like endonuclease involved in cleaving double-stranded RNA in the RNA interference (RNAi) pathway. Produces 21 to 25 bp dsRNAs (siRNAs) which target the selective destruction of homologous RNAs leading to sequence-specific suppression of gene expression, called post-transcriptional gene silencing (PTGS). Part of a broad host defense response against viral infection and transposons. The polypeptide is Dicer-like protein 1 (dcl1) (Aspergillus oryzae (strain ATCC 42149 / RIB 40) (Yellow koji mold)).